The primary structure comprises 328 residues: Peroxidase 59 (328 aa).

The signal sequence occupies residues 1–28 (MKTQTKVMGGHVLLTVFTLCMLCSGVRA). The residue at position 29 (Gln29) is a Pyrrolidone carboxylic acid. 4 cysteine pairs are disulfide-bonded: Cys39/Cys116, Cys72/Cys77, Cys122/Cys323, and Cys200/Cys232. His70 serves as the catalytic Proton acceptor. Ca(2+) is bound by residues Asp71, Val74, Gly76, Asp78, and Ser80. Pro163 is a binding site for substrate. Residue Asn182 is glycosylated (N-linked (GlcNAc...) asparagine). His193 provides a ligand contact to heme b. Thr194 serves as a coordination point for Ca(2+). N-linked (GlcNAc...) asparagine glycosylation is found at Asn209 and Asn239. Residues Asp245, Thr248, Thr251, and Asp253 each contribute to the Ca(2+) site. N-linked (GlcNAc...) asparagine glycans are attached at residues Asn281 and Asn310.

The protein belongs to the peroxidase family. Classical plant (class III) peroxidase subfamily. Heme b is required as a cofactor. Requires Ca(2+) as cofactor. Slightly expressed in roots.

Its subcellular location is the secreted. It carries out the reaction 2 a phenolic donor + H2O2 = 2 a phenolic radical donor + 2 H2O. Its function is as follows. Removal of H(2)O(2), oxidation of toxic reductants, biosynthesis and degradation of lignin, suberization, auxin catabolism, response to environmental stresses such as wounding, pathogen attack and oxidative stress. These functions might be dependent on each isozyme/isoform in each plant tissue. In Arabidopsis thaliana (Mouse-ear cress), this protein is Peroxidase 59 (PER59).